Consider the following 299-residue polypeptide: UDP-N-acetylenolpyruvoylglucosamine reductase (299 aa).

The FAD-binding PCMH-type domain occupies 28–193; it reads IGGPVDLMVL…VSALMQLHKE (166 aa). The active site involves Arg-172. Ser-222 serves as the catalytic Proton donor. Residue Glu-292 is part of the active site.

It belongs to the MurB family. FAD is required as a cofactor.

It localises to the cytoplasm. It carries out the reaction UDP-N-acetyl-alpha-D-muramate + NADP(+) = UDP-N-acetyl-3-O-(1-carboxyvinyl)-alpha-D-glucosamine + NADPH + H(+). It participates in cell wall biogenesis; peptidoglycan biosynthesis. Its function is as follows. Cell wall formation. This is UDP-N-acetylenolpyruvoylglucosamine reductase from Syntrophomonas wolfei subsp. wolfei (strain DSM 2245B / Goettingen).